The chain runs to 442 residues: Probable xylan O-acetyltransferase 8 (442 aa).

Over 1-13 the chain is Cytoplasmic; the sequence is MVQLPAMKRVKGR. A helical; Signal-anchor for type II membrane protein transmembrane segment spans residues 14 to 34; sequence APLSVVVAIIGGLALAGIIFT. Topologically, residues 35–442 are lumenal; it reads EDLRGLTEVK…TWNRLLYAHL (408 aa). Asparagine 96 is a glycosylation site (N-linked (GlcNAc...) asparagine). Intrachain disulfides connect cysteine 100–cysteine 151, cysteine 122–cysteine 187, cysteine 131–cysteine 426, and cysteine 344–cysteine 422. Residues 174–176 carry the GDS motif motif; sequence GDS. The Nucleophile role is filled by serine 176. 3 N-linked (GlcNAc...) asparagine glycosylation sites follow: asparagine 217, asparagine 346, and asparagine 384. Aspartate 421 serves as the catalytic Proton donor. The DXXH motif signature appears at 421–424; the sequence is DCIH. The active-site Proton acceptor is histidine 424.

The protein belongs to the PC-esterase family. TBL subfamily.

The protein resides in the golgi apparatus membrane. Functionally, probable xylan acetyltransferase required for 2-O- and 3-O-monoacetylation of xylosyl residues in xylan. Possesses extremely low activity in vitro. In Oryza sativa subsp. japonica (Rice), this protein is Probable xylan O-acetyltransferase 8.